Consider the following 357-residue polypeptide: Histidinol-phosphate aminotransferase (357 aa).

Lys-218 carries the N6-(pyridoxal phosphate)lysine modification.

It belongs to the class-II pyridoxal-phosphate-dependent aminotransferase family. Histidinol-phosphate aminotransferase subfamily. Homodimer. Pyridoxal 5'-phosphate serves as cofactor.

It carries out the reaction L-histidinol phosphate + 2-oxoglutarate = 3-(imidazol-4-yl)-2-oxopropyl phosphate + L-glutamate. It functions in the pathway amino-acid biosynthesis; L-histidine biosynthesis; L-histidine from 5-phospho-alpha-D-ribose 1-diphosphate: step 7/9. In Prosthecochloris aestuarii (strain DSM 271 / SK 413), this protein is Histidinol-phosphate aminotransferase.